Here is a 505-residue protein sequence, read N- to C-terminus: Glutamate--tRNA ligase (505 aa).

Positions 12–22 (PSPTGDPHVGT) match the 'HIGH' region motif. Positions 253-257 (KLSKR) match the 'KMSKS' region motif. Position 256 (Lys256) interacts with ATP.

Belongs to the class-I aminoacyl-tRNA synthetase family. Glutamate--tRNA ligase type 1 subfamily. Monomer.

It localises to the cytoplasm. It carries out the reaction tRNA(Glu) + L-glutamate + ATP = L-glutamyl-tRNA(Glu) + AMP + diphosphate. Functionally, catalyzes the attachment of glutamate to tRNA(Glu) in a two-step reaction: glutamate is first activated by ATP to form Glu-AMP and then transferred to the acceptor end of tRNA(Glu). The chain is Glutamate--tRNA ligase from Chlamydia pneumoniae (Chlamydophila pneumoniae).